Here is a 417-residue protein sequence, read N- to C-terminus: Serine/threonine-protein kinase SBK1 (417 aa).

One can recognise a Protein kinase domain in the interval 53 to 318 (YELVRELGKG…VFRFLKHELT (266 aa)). ATP contacts are provided by residues 59–67 (LGKGTYGKV) and lysine 82. Catalysis depends on aspartate 174, which acts as the Proton acceptor. The disordered stretch occupies residues 321–405 (LRRRPSHRAR…TDGRTDKSKG (85 aa)). Residues 363-382 (PSPPSVGPVVPVPVPVPVPV) are compositionally biased toward pro residues.

This sequence belongs to the protein kinase superfamily. Ser/Thr protein kinase family.

It is found in the cytoplasm. It catalyses the reaction L-seryl-[protein] + ATP = O-phospho-L-seryl-[protein] + ADP + H(+). The enzyme catalyses L-threonyl-[protein] + ATP = O-phospho-L-threonyl-[protein] + ADP + H(+). May be involved in signal-transduction pathways related to the control of brain development. This chain is Serine/threonine-protein kinase SBK1 (Sbk1), found in Mus musculus (Mouse).